Reading from the N-terminus, the 308-residue chain is Aspartate carbamoyltransferase catalytic subunit (308 aa).

Residues Arg-55 and Thr-56 each coordinate carbamoyl phosphate. Lys-83 provides a ligand contact to L-aspartate. Residues Arg-105, His-133, and Gln-136 each coordinate carbamoyl phosphate. The L-aspartate site is built by Arg-166 and Arg-220. Residues Gly-261 and Pro-262 each contribute to the carbamoyl phosphate site.

The protein belongs to the aspartate/ornithine carbamoyltransferase superfamily. ATCase family. Heterododecamer (2C3:3R2) of six catalytic PyrB chains organized as two trimers (C3), and six regulatory PyrI chains organized as three dimers (R2).

The catalysed reaction is carbamoyl phosphate + L-aspartate = N-carbamoyl-L-aspartate + phosphate + H(+). It functions in the pathway pyrimidine metabolism; UMP biosynthesis via de novo pathway; (S)-dihydroorotate from bicarbonate: step 2/3. Catalyzes the condensation of carbamoyl phosphate and aspartate to form carbamoyl aspartate and inorganic phosphate, the committed step in the de novo pyrimidine nucleotide biosynthesis pathway. The chain is Aspartate carbamoyltransferase catalytic subunit from Chlorobaculum tepidum (strain ATCC 49652 / DSM 12025 / NBRC 103806 / TLS) (Chlorobium tepidum).